A 331-amino-acid chain; its full sequence is Probable leucine carboxyl methyltransferase 1 (331 aa).

S-adenosyl-L-methionine-binding positions include R82, G107, D131, 179–180 (DL), and E206.

The protein belongs to the methyltransferase superfamily. LCMT family.

The catalysed reaction is [phosphatase 2A protein]-C-terminal L-leucine + S-adenosyl-L-methionine = [phosphatase 2A protein]-C-terminal L-leucine methyl ester + S-adenosyl-L-homocysteine. Its function is as follows. Methylates the carboxyl group of the C-terminal leucine residue of protein phosphatase 2A catalytic subunits to form alpha-leucine ester residues. The sequence is that of Probable leucine carboxyl methyltransferase 1 from Caenorhabditis briggsae.